The sequence spans 103 residues: Small ribosomal subunit protein uS10 (103 aa).

The protein belongs to the universal ribosomal protein uS10 family. In terms of assembly, part of the 30S ribosomal subunit.

Its function is as follows. Involved in the binding of tRNA to the ribosomes. This chain is Small ribosomal subunit protein uS10, found in Campylobacter hominis (strain ATCC BAA-381 / DSM 21671 / CCUG 45161 / LMG 19568 / NCTC 13146 / CH001A).